Reading from the N-terminus, the 351-residue chain is Photosystem II D2 protein 2 (351 aa).

The chain crosses the membrane as a helical span at residues 39 to 59; it reads CAFLSIGGWFTGTTFVTSWYT. Residue H116 participates in chlorophyll a binding. Residues 123-139 form a helical membrane-spanning segment; the sequence is GFMLRQFEIARLVNVRP. Q128 and N141 together coordinate pheophytin a. Residues 151–164 traverse the membrane as a helical segment; the sequence is VFVSVFLMYPLGQS. Residue H196 participates in chlorophyll a binding. Residues 206–226 traverse the membrane as a helical segment; that stretch reads GALLCAIHGATVENTLFEDTK. 2 residues coordinate a plastoquinone: H213 and F260. A Fe cation-binding site is contributed by H213. Residue H267 participates in Fe cation binding. The helical transmembrane segment at 277 to 293 threads the bilayer; the sequence is GLWASAIGLVGIALNMR.

This sequence belongs to the reaction center PufL/M/PsbA/D family. PSII is composed of 1 copy each of membrane proteins PsbA, PsbB, PsbC, PsbD, PsbE, PsbF, PsbH, PsbI, PsbJ, PsbK, PsbL, PsbM, PsbT, PsbX, PsbY, PsbZ, Psb30/Ycf12, peripheral proteins PsbO, CyanoQ (PsbQ), PsbU, PsbV and a large number of cofactors. It forms dimeric complexes. The D1/D2 heterodimer binds P680, chlorophylls that are the primary electron donor of PSII, and subsequent electron acceptors. It shares a non-heme iron and each subunit binds pheophytin, quinone, additional chlorophylls, carotenoids and lipids. There is also a Cl(-1) ion associated with D1 and D2, which is required for oxygen evolution. The PSII complex binds additional chlorophylls, carotenoids and specific lipids. is required as a cofactor.

It is found in the cellular thylakoid membrane. It catalyses the reaction 2 a plastoquinone + 4 hnu + 2 H2O = 2 a plastoquinol + O2. Its function is as follows. Photosystem II (PSII) is a light-driven water:plastoquinone oxidoreductase that uses light energy to abstract electrons from H(2)O, generating O(2) and a proton gradient subsequently used for ATP formation. It consists of a core antenna complex that captures photons, and an electron transfer chain that converts photonic excitation into a charge separation. The D1/D2 (PsbA/PsbD) reaction center heterodimer binds P680, the primary electron donor of PSII as well as several subsequent electron acceptors. D2 is needed for assembly of a stable PSII complex. The chain is Photosystem II D2 protein 2 from Acaryochloris marina (strain MBIC 11017).